Reading from the N-terminus, the 513-residue chain is ATP synthase subunit alpha (513 aa).

Position 169–176 (169–176 (GDRQTGKT)) interacts with ATP.

This sequence belongs to the ATPase alpha/beta chains family. In terms of assembly, F-type ATPases have 2 components, CF(1) - the catalytic core - and CF(0) - the membrane proton channel. CF(1) has five subunits: alpha(3), beta(3), gamma(1), delta(1), epsilon(1). CF(0) has three main subunits: a(1), b(2) and c(9-12). The alpha and beta chains form an alternating ring which encloses part of the gamma chain. CF(1) is attached to CF(0) by a central stalk formed by the gamma and epsilon chains, while a peripheral stalk is formed by the delta and b chains.

It is found in the cell inner membrane. It catalyses the reaction ATP + H2O + 4 H(+)(in) = ADP + phosphate + 5 H(+)(out). In terms of biological role, produces ATP from ADP in the presence of a proton gradient across the membrane. The alpha chain is a regulatory subunit. The protein is ATP synthase subunit alpha of Thioalkalivibrio sulfidiphilus (strain HL-EbGR7).